The chain runs to 137 residues: UPF0148 protein MJ0890 (137 aa).

Belongs to the UPF0148 family.

This Methanocaldococcus jannaschii (strain ATCC 43067 / DSM 2661 / JAL-1 / JCM 10045 / NBRC 100440) (Methanococcus jannaschii) protein is UPF0148 protein MJ0890.